The chain runs to 505 residues: uncharacterized protein (505 aa).

An N-terminal signal peptide occupies residues 1-22; sequence MAILKSALVGFICFLHFFIVNA. Residues Asn-25 and Asn-114 are each glycosylated (N-linked (GlcNAc...) asparagine). 5 helical membrane-spanning segments follow: residues 181 to 201, 216 to 236, 266 to 286, 291 to 311, and 318 to 338; these read LFLN…WSFI, ISGV…YFYF, FLLL…GSLL, ILAG…FISP, and VILF…LWIV. N-linked (GlcNAc...) asparagine glycosylation is present at Asn-342. 2 helical membrane passes run 365-385 and 400-420; these read IVIC…AILI and LLWF…MLTI. N-linked (GlcNAc...) asparagine glycosylation occurs at Asn-454.

Belongs to the LU7TM family.

It localises to the membrane. This is an uncharacterized protein from Schizosaccharomyces pombe (strain 972 / ATCC 24843) (Fission yeast).